The primary structure comprises 425 residues: Enolase (425 aa).

Position 162 (Gln-162) interacts with (2R)-2-phosphoglycerate. Catalysis depends on Glu-204, which acts as the Proton donor. Residues Asp-241, Glu-282, and Asp-309 each coordinate Mg(2+). Lys-334, Arg-363, Ser-364, and Lys-385 together coordinate (2R)-2-phosphoglycerate. Residue Lys-334 is the Proton acceptor of the active site.

The protein belongs to the enolase family. Mg(2+) is required as a cofactor.

The protein localises to the cytoplasm. The protein resides in the secreted. Its subcellular location is the cell surface. It catalyses the reaction (2R)-2-phosphoglycerate = phosphoenolpyruvate + H2O. Its pathway is carbohydrate degradation; glycolysis; pyruvate from D-glyceraldehyde 3-phosphate: step 4/5. Catalyzes the reversible conversion of 2-phosphoglycerate (2-PG) into phosphoenolpyruvate (PEP). It is essential for the degradation of carbohydrates via glycolysis. The chain is Enolase from Corynebacterium efficiens (strain DSM 44549 / YS-314 / AJ 12310 / JCM 11189 / NBRC 100395).